Here is a 238-residue protein sequence, read N- to C-terminus: DNA repair protein RecO (238 aa).

This sequence belongs to the RecO family.

Involved in DNA repair and RecF pathway recombination. This is DNA repair protein RecO from Cereibacter sphaeroides (strain ATCC 17023 / DSM 158 / JCM 6121 / CCUG 31486 / LMG 2827 / NBRC 12203 / NCIMB 8253 / ATH 2.4.1.) (Rhodobacter sphaeroides).